Here is a 535-residue protein sequence, read N- to C-terminus: Pescadillo homolog (535 aa).

The 93-residue stretch at 314–406 (KRKQLFANYR…SCLSIKKYLP (93 aa)) folds into the BRCT domain.

This sequence belongs to the pescadillo family.

The protein localises to the nucleus. It is found in the nucleolus. Its subcellular location is the nucleoplasm. Required for maturation of ribosomal RNAs and formation of the large ribosomal subunit. The chain is Pescadillo homolog from Brugia malayi (Filarial nematode worm).